A 522-amino-acid chain; its full sequence is Glucose-6-phosphate isomerase (522 aa).

Glutamate 351 functions as the Proton donor in the catalytic mechanism. Active-site residues include histidine 382 and lysine 491.

The protein belongs to the GPI family.

The protein resides in the cytoplasm. The catalysed reaction is alpha-D-glucose 6-phosphate = beta-D-fructose 6-phosphate. It functions in the pathway carbohydrate biosynthesis; gluconeogenesis. Its pathway is carbohydrate degradation; glycolysis; D-glyceraldehyde 3-phosphate and glycerone phosphate from D-glucose: step 2/4. Catalyzes the reversible isomerization of glucose-6-phosphate to fructose-6-phosphate. The polypeptide is Glucose-6-phosphate isomerase (Albidiferax ferrireducens (strain ATCC BAA-621 / DSM 15236 / T118) (Rhodoferax ferrireducens)).